The primary structure comprises 872 residues: Telomerase component p95 (872 aa).

Disordered regions lie at residues 55-75 and 471-492; these read NQDQ…NSNK and KNNK…ESTS. Basic and acidic residues predominate over residues 474–486; the sequence is KNQEETPETKDET.

Telomerase consist of two subunit, p80 and p95 that form a 1:1:1 complex with the 159 nt telomerase RNA.

Its subcellular location is the nucleus. It localises to the chromosome. The protein localises to the telomere. The enzyme catalyses DNA(n) + a 2'-deoxyribonucleoside 5'-triphosphate = DNA(n+1) + diphosphate. Ribonucleoprotein DNA polymerase that catalyzes the de novo synthesis of telomeric simple sequence repeats. Subunit p95 contains some or all of the template-independent primer DNA-binding site termed the anchor site. This Tetrahymena thermophila protein is Telomerase component p95.